Consider the following 658-residue polypeptide: Biosynthetic arginine decarboxylase (658 aa).

Lys-127 is modified (N6-(pyridoxal phosphate)lysine). Residue 307–317 participates in substrate binding; sequence FDVGGGLGVDY.

This sequence belongs to the Orn/Lys/Arg decarboxylase class-II family. SpeA subfamily. Mg(2+) is required as a cofactor. It depends on pyridoxal 5'-phosphate as a cofactor.

The enzyme catalyses L-arginine + H(+) = agmatine + CO2. It functions in the pathway amine and polyamine biosynthesis; agmatine biosynthesis; agmatine from L-arginine: step 1/1. In terms of biological role, catalyzes the biosynthesis of agmatine from arginine. In Salmonella typhi, this protein is Biosynthetic arginine decarboxylase.